We begin with the raw amino-acid sequence, 1000 residues long: Integrin alpha-PS5 (1000 aa).

FG-GAP repeat units lie at residues 15–74, 75–137, 145–198, 199–261, 262–323, 324–379, and 386–448; these read KHLK…GSCS, HYVL…DTPP, SLIP…AAQG, SYAV…GEIV, RKLH…FKFE, KKII…GLRD, and DAPS…SESR. Asparagine 58 carries N-linked (GlcNAc...) asparagine glycosylation. Asparagine 231 is a glycosylation site (N-linked (GlcNAc...) asparagine). Residues asparagine 516, asparagine 592, asparagine 622, asparagine 732, asparagine 771, asparagine 829, asparagine 842, asparagine 853, and asparagine 922 are each glycosylated (N-linked (GlcNAc...) asparagine). The chain crosses the membrane as a helical span at residues 930–950; it reads IWYIILSLIAGHLLLGAMTYI. Topologically, residues 951–1000 are cytoplasmic; the sequence is LYKLRFFKRGKKEELKRLLEEHRSETKEPATDCEGNQEEINVEMHSDLEN. Residues 971–980 are compositionally biased toward basic and acidic residues; sequence EHRSETKEPA. Positions 971-1000 are disordered; the sequence is EHRSETKEPATDCEGNQEEINVEMHSDLEN.

It belongs to the integrin alpha chain family. As to quaternary structure, heterodimer of an alpha and a beta subunit. Alpha-PS5 associates with beta-PS. Expressed in all follicle cells overlying the oocyte during mid-oogenesis, the strongest expression is observed in the cells covering the anterior end of the oocyte and in the cells forming the dorsal appendages. After completion of oocyte enlargement, expression in main body follicle cells is down-regulated but persists strongly in the dorsal appendage forming cells. Expressed in lamellocytes.

The protein resides in the membrane. In terms of biological role, possible role in cell-cell interactions. Minor involvement in the establishment of the oocyte anterior-posterior length. This Drosophila melanogaster (Fruit fly) protein is Integrin alpha-PS5.